The sequence spans 707 residues: Ribosomal RNA large subunit methyltransferase K/L (707 aa).

Positions 44 to 155 constitute a THUMP domain; that stretch reads VIYNLCLWSR…NDILTVSFDL (112 aa).

Belongs to the methyltransferase superfamily. RlmKL family.

The protein resides in the cytoplasm. The catalysed reaction is guanosine(2445) in 23S rRNA + S-adenosyl-L-methionine = N(2)-methylguanosine(2445) in 23S rRNA + S-adenosyl-L-homocysteine + H(+). The enzyme catalyses guanosine(2069) in 23S rRNA + S-adenosyl-L-methionine = N(2)-methylguanosine(2069) in 23S rRNA + S-adenosyl-L-homocysteine + H(+). Specifically methylates the guanine in position 2445 (m2G2445) and the guanine in position 2069 (m7G2069) of 23S rRNA. The polypeptide is Ribosomal RNA large subunit methyltransferase K/L (Legionella pneumophila (strain Paris)).